The chain runs to 163 residues: N5-carboxyaminoimidazole ribonucleotide mutase (163 aa).

Substrate-binding residues include Ser-11, Asp-14, and Arg-41.

This sequence belongs to the AIR carboxylase family. Class I subfamily.

The catalysed reaction is 5-carboxyamino-1-(5-phospho-D-ribosyl)imidazole + H(+) = 5-amino-1-(5-phospho-D-ribosyl)imidazole-4-carboxylate. The protein operates within purine metabolism; IMP biosynthesis via de novo pathway; 5-amino-1-(5-phospho-D-ribosyl)imidazole-4-carboxylate from 5-amino-1-(5-phospho-D-ribosyl)imidazole (N5-CAIR route): step 2/2. In terms of biological role, catalyzes the conversion of N5-carboxyaminoimidazole ribonucleotide (N5-CAIR) to 4-carboxy-5-aminoimidazole ribonucleotide (CAIR). The chain is N5-carboxyaminoimidazole ribonucleotide mutase from Pseudomonas aeruginosa (strain ATCC 15692 / DSM 22644 / CIP 104116 / JCM 14847 / LMG 12228 / 1C / PRS 101 / PAO1).